Reading from the N-terminus, the 293-residue chain is Elongation factor Ts (293 aa).

An involved in Mg(2+) ion dislocation from EF-Tu region spans residues Thr79 to Val82. A Phosphoserine modification is found at Ser149.

It belongs to the EF-Ts family.

Its subcellular location is the cytoplasm. Its function is as follows. Associates with the EF-Tu.GDP complex and induces the exchange of GDP to GTP. It remains bound to the aminoacyl-tRNA.EF-Tu.GTP complex up to the GTP hydrolysis stage on the ribosome. This Bacillus subtilis (strain 168) protein is Elongation factor Ts (tsf).